We begin with the raw amino-acid sequence, 350 residues long: LIM domain-containing protein unc-95 (350 aa).

A compositionally biased stretch (polar residues) spans 1–37 (MTISPQPSHQQFESYQWTTESRSSQQRHGTGTPSQDG). The interval 1-65 (MTISPQPSHQ…ESRNSNKDKV (65 aa)) is disordered. Positions 45–65 (PVERHVARWRSESRNSNKDKV) are enriched in basic and acidic residues. Residues 83-110 (LTALKNDVEQTTEIIRRKQEQMRMERRQ) adopt a coiled-coil conformation. Disordered regions lie at residues 177-198 (RRGQ…EIEY), 206-225 (PEEQ…METD), and 235-262 (MSEE…SGSP). Residues 268-334 (AVCAYCSEEI…HDCFYKLYNG (67 aa)) form the LIM zinc-binding domain.

Ubiquitinated. Ubiquitination by rnf-5 leads to dissociation from muscle dense bodies during molting and is required for ecdysis. Expressed in the body wall muscles, vulval muscles and the anal muscles. Expressed in the muscle arms of the head muscle cells that form neuromuscular junctions and in the anal depressor muscle.

It is found in the cytoplasm. The protein resides in the nucleus. The protein localises to the cell membrane. Its subcellular location is the myofibril. It localises to the sarcomere. It is found in the m line. The protein resides in the cell junction. The protein localises to the focal adhesion. Functionally, required for the assembly and integrity of muscle dense bodies, which establish the adhesion sites of the muscle cells to the extracellular matrix. Decreased localization of unc-95 to dense bodies and their subsequent dissociation plays an important role in ecdysis during molting. Involved in the organization of the muscle sarcomeric structure and thereby required for locomotion. This Caenorhabditis elegans protein is LIM domain-containing protein unc-95.